The sequence spans 906 residues: Protein translocase subunit SecA (906 aa).

Residues Q86, 104–108, and D511 each bind ATP; that span reads GEGKT. Basic and acidic residues-rich tracts occupy residues 853–865 and 877–888; these read HESV…RHDE and VRREGPKVKRND. Positions 853-906 are disordered; sequence HESVIDNNQRHDEDEQEEAPKVQQVRREGPKVKRNDPCPCGSGKKYKQCHSKVE. C890, C892, C901, and H902 together coordinate Zn(2+). Basic residues predominate over residues 896 to 906; that stretch reads KKYKQCHSKVE.

This sequence belongs to the SecA family. In terms of assembly, monomer and homodimer. Part of the essential Sec protein translocation apparatus which comprises SecA, SecYEG and auxiliary proteins SecDF-YajC and YidC. Zn(2+) serves as cofactor.

It localises to the cell inner membrane. The protein resides in the cytoplasm. The catalysed reaction is ATP + H2O + cellular proteinSide 1 = ADP + phosphate + cellular proteinSide 2.. Part of the Sec protein translocase complex. Interacts with the SecYEG preprotein conducting channel. Has a central role in coupling the hydrolysis of ATP to the transfer of proteins into and across the cell membrane, serving both as a receptor for the preprotein-SecB complex and as an ATP-driven molecular motor driving the stepwise translocation of polypeptide chains across the membrane. This is Protein translocase subunit SecA from Francisella tularensis subsp. mediasiatica (strain FSC147).